Consider the following 450-residue polypeptide: MREIISIHIGQAGIQVGNACWELYCLEHGIEHDGTMPSDSSVGVAHDAFNTFFSETGSGKHVPRAIFVDLEPTVIDEVRTGSYRQLFHPEQLISGKEDAANNFARGHYTVGKEIVDLCLDRVRKLADNCTGLQGFLVFNAVGGGTGSGLGSLLLERLSVDYGKKSKLGFTIYPSPQVSTAVVEPYNSVLSTHSLLEHTDVAVLLDNEAIYDICRRSLDIERPTYTNLNRLISQIISSLTTSLRFDGAINVDVTEFQTNLVPYPRIHFMLSSYAPVISAEKAYHEQLSVPEITNAVFEPSSMMAKCDPRHGKYMACCLMYRGDVVPKDVNAAVATIKTKRTVQFVDWCPTGFKCGINYQPPSVVPGGDLAKVQRAVCMISNNTAVAEVFSRIDHKFDLMYAKRAFVHWYVGEGMEEGEFSEAREDLAALEKDYEEVGAEGADDEGDEGDDY.

The GTP site is built by glutamine 11, glutamate 71, glycine 144, threonine 145, threonine 179, asparagine 206, and asparagine 228. Glutamate 71 contacts Mg(2+). Glutamate 254 is an active-site residue.

This sequence belongs to the tubulin family. As to quaternary structure, dimer of alpha and beta chains. A typical microtubule is a hollow water-filled tube with an outer diameter of 25 nm and an inner diameter of 15 nM. Alpha-beta heterodimers associate head-to-tail to form protofilaments running lengthwise along the microtubule wall with the beta-tubulin subunit facing the microtubule plus end conferring a structural polarity. Microtubules usually have 13 protofilaments but different protofilament numbers can be found in some organisms and specialized cells. It depends on Mg(2+) as a cofactor. In terms of processing, undergoes a tyrosination/detyrosination cycle, the cyclic removal and re-addition of a C-terminal tyrosine residue by the enzymes tubulin tyrosine carboxypeptidase (TTCP) and tubulin tyrosine ligase (TTL), respectively.

It localises to the cytoplasm. It is found in the cytoskeleton. The catalysed reaction is GTP + H2O = GDP + phosphate + H(+). In terms of biological role, tubulin is the major constituent of microtubules, a cylinder consisting of laterally associated linear protofilaments composed of alpha- and beta-tubulin heterodimers. Microtubules grow by the addition of GTP-tubulin dimers to the microtubule end, where a stabilizing cap forms. Below the cap, tubulin dimers are in GDP-bound state, owing to GTPase activity of alpha-tubulin. This is Tubulin alpha-5 chain (TUBA5) from Zea mays (Maize).